Reading from the N-terminus, the 502-residue chain is MSNYPWLTIIVLLPIPAGLLIPLLPSPNGGNKIIRWYTLGICLLEFLLITHTFCYHFDIDNPFIQLREDYNWINIIDFHWRLGIDGFSIGLTPLTGFVTTLATLAAWPVTRSPRLFHSSMLAMYSGQVGLFTSQDILLFFLMWELELIPVYLLLSMWGGKRRLYAATKFILYTAGGSIPLLIGALTMGLHGFDEPTLDFQNLANRSYPIALEIVLYLSFFVAYAVKLPIFPLHTWLPDTHGEAHYSTCMLLAGILLKMGGYGLIRINMELLPHAHSIFAPWLVIVGAFQIVYAASISSSQRNSKRRIAYSSISHMGFVLIGIGSATNIGLNGAILQMISHGLIGAAPFSLAGTSYDRTRTPFLDQMGGIGTSMPKTFTMFSSFSMASLALPGTSGFAAESMVFPGIVSGKNYSLPFKIIITIVEAIGIILTPIYLLSMLRQMFYGYFNKVSNLSISHAMDSGPREIFISICLLLPTIGIGLYPNLILSLCNSKVEFILSHNF.

The next 13 membrane-spanning stretches (helical) occupy residues 4-24 (YPWL…IPLL), 39-59 (LGIC…HFDI), 89-109 (IGLT…AWPV), 115-132 (LFHS…GLFT), 136-156 (ILLF…LLSM), 169-189 (FILY…TMGL), 209-229 (IALE…KLPI), 244-264 (HYST…YGLI), 276-296 (SIFA…AASI), 315-335 (MGFV…GAIL), 387-407 (SLAL…PGIV), 418-438 (IIIT…LLSM), and 466-486 (IFIS…PNLI).

Belongs to the complex I subunit 4 family.

The protein resides in the plastid. It localises to the chloroplast thylakoid membrane. The catalysed reaction is a plastoquinone + NADH + (n+1) H(+)(in) = a plastoquinol + NAD(+) + n H(+)(out). The enzyme catalyses a plastoquinone + NADPH + (n+1) H(+)(in) = a plastoquinol + NADP(+) + n H(+)(out). The chain is NAD(P)H-quinone oxidoreductase chain 4, chloroplastic from Huperzia lucidula (Shining clubmoss).